The sequence spans 555 residues: Natural resistance-associated macrophage protein 1 (555 aa).

Topologically, residues 1 to 63 are cytoplasmic; the sequence is MSGSGPAMAS…STPGFSFRKL (63 aa). Residues 64 to 81 form a helical membrane-spanning segment; it reads WAFTGPGFLMSIAYLDPG. At 82–90 the chain is on the extracellular side; the sequence is NVESDLQCG. Residues 91-110 traverse the membrane as a helical segment; the sequence is AVAGFKLLWVLLWATVLGLL. The Cytoplasmic portion of the chain corresponds to 111–147; sequence CQRLAIRLGVVTGKDLAEICYLYYPRVPRVLLWLMME. The helical transmembrane segment at 148–168 threads the bilayer; it reads IAIIGSDMQEVIGTAIAFSLL. Topologically, residues 169-172 are extracellular; it reads SAGR. Residues 173–192 form a helical membrane-spanning segment; the sequence is IPLWGGVLITITDTLFFLFL. Residues 193 to 201 are Cytoplasmic-facing; it reads DKYGLRKLE. A helical transmembrane segment spans residues 202–222; that stretch reads AFFGFLITIMALTFGYEYVMV. Topologically, residues 223-245 are extracellular; the sequence is RPAQTEVLKGIFLPYCPGCGREE. Residues 246–264 traverse the membrane as a helical segment; sequence LLQAVGIVGAIIMPHNIFL. The Cytoplasmic segment spans residues 265 to 292; it reads HSSLVKTRAIDRSKKEEVKEANMYFLTE. Residues 293–312 traverse the membrane as a helical segment; it reads SCLALFVSFLINLFVMAVFG. The Extracellular segment spans residues 313–354; the sequence is EAFYHQRNEDVHNKCVNSSVSRYASIFPINNETVSVDIYQGG. Residues Asn329 and Asn343 are each glycosylated (N-linked (GlcNAc...) asparagine). A helical membrane pass occupies residues 355–374; that stretch reads VILGCYFGAAALYIWAVGIL. The Cytoplasmic segment spans residues 375 to 405; the sequence is AAGQSSTMTGTYAGQFVMEGFLQLRWSRFTR. The chain crosses the membrane as a helical span at residues 406–423; it reads VLFTRSLAILPTLFVAAF. At 424–434 the chain is on the extracellular side; the sequence is RDVSQLTGMND. The helical transmembrane segment at 435-455 threads the bilayer; it reads LLNVLQSILLPFAVLPVLTFT. The Cytoplasmic segment spans residues 456–471; that stretch reads SLRPLMHDFANGLLGQ. A helical membrane pass occupies residues 472-493; sequence VLMSLITGLVCAINVYFVVDFL. Over 494–501 the chain is Extracellular; the sequence is PTLRGLGY. The helical transmembrane segment at 502–521 threads the bilayer; it reads LIPLGLLLVAYVAFVTYLLW. Residues 522 to 555 lie on the Cytoplasmic side of the membrane; that stretch reads TCSIAHGARFLARGRYNRFSFDVTADVPGLAGPH.

This sequence belongs to the NRAMP family. In terms of tissue distribution, macrophages; spleen and thymus and at lower level in liver and lung.

The protein resides in the late endosome membrane. It is found in the lysosome membrane. It catalyses the reaction Zn(2+)(in) + H(+)(out) = Zn(2+)(out) + H(+)(in). The enzyme catalyses Fe(2+)(in) + H(+)(out) = Fe(2+)(out) + H(+)(in). The catalysed reaction is Mn(2+)(in) + H(+)(out) = Mn(2+)(out) + H(+)(in). In terms of biological role, macrophage-specific antiporter that fluxes metal ions in either direction against a proton gradient. Localized to late endosomal lysosomal membranes, delivers bivalent cations from the cytosol into these acidic compartments where they may directly affect antimicrobial activity. Involved in iron metabolism and host natural resistance to infection with intracellular parasites. Pathogen resistance involves sequestration of Fe(2+) and Mn(2+), cofactors of both prokaryotic and eukaryotic catalases and superoxide dismutases, not only to protect the macrophage against its own generation of reactive oxygen species, but to deny the cations to the pathogen for synthesis of its protective enzymes. The sequence is that of Natural resistance-associated macrophage protein 1 (SLC11A1) from Gallus gallus (Chicken).